A 251-amino-acid polypeptide reads, in one-letter code: ATP synthase subunit a (251 aa).

The next 7 helical transmembrane spans lie at 29-49, 56-73, 87-107, 117-137, 159-181, 192-212, and 218-238; these read FTQSALYMFAAVGIIALITLV, LVPGRMQSLAEAFYEFIA, FVPLVFSLFMFVLVLNLFGMI, IIVTFMLALVVILTVVIYGFM, LIVAIEVVSFISRPISLSVRLFA, IFAGFVPALLAAGIWGILSPL, and VAITALEMLVAVLQAYVFATL.

The protein belongs to the ATPase A chain family. F-type ATPases have 2 components, CF(1) - the catalytic core - and CF(0) - the membrane proton channel. CF(1) has five subunits: alpha(3), beta(3), gamma(1), delta(1), epsilon(1). CF(0) has three main subunits: a(1), b(2) and c(9-12). The alpha and beta chains form an alternating ring which encloses part of the gamma chain. CF(1) is attached to CF(0) by a central stalk formed by the gamma and epsilon chains, while a peripheral stalk is formed by the delta and b chains.

The protein localises to the cell inner membrane. Its function is as follows. Key component of the proton channel; it plays a direct role in the translocation of protons across the membrane. The polypeptide is ATP synthase subunit a (Methylobacterium sp. (strain 4-46)).